A 329-amino-acid polypeptide reads, in one-letter code: Octaprenyl diphosphate synthase (329 aa).

Isopentenyl diphosphate is bound by residues K51, R54, and H83. Mg(2+)-binding residues include D90 and D94. R99 lines the an all-trans-polyprenyl diphosphate pocket. R100 is an isopentenyl diphosphate binding site. 3 residues coordinate an all-trans-polyprenyl diphosphate: K176, T177, and Q214.

It belongs to the FPP/GGPP synthase family. The cofactor is Mg(2+).

It catalyses the reaction 5 isopentenyl diphosphate + (2E,6E)-farnesyl diphosphate = all-trans-octaprenyl diphosphate + 5 diphosphate. Supplies octaprenyl diphosphate, the precursor for the side chain of the isoprenoid quinones ubiquinone and menaquinone. The polypeptide is Octaprenyl diphosphate synthase (ispB) (Haemophilus influenzae (strain ATCC 51907 / DSM 11121 / KW20 / Rd)).